The sequence spans 559 residues: Cytokine-like nuclear factor N-PAC (559 aa).

One can recognise a PWWP domain in the interval 9-70; the sequence is VNDLVWAKMK…ETQIKPYQEF (62 aa). A disordered region spans residues 106–137; that stretch reads SEQDNRPDPDVEFNKLREGGTESGEETTVNNT. The segment covering 108–125 has biased composition (basic and acidic residues); it reads QDNRPDPDVEFNKLREGG. The dehydrogenase domain stretch occupies residues 267-559; the sequence is RNIQASNLKF…SSAVYVRARF (293 aa). NAD(+) contacts are provided by residues 277 to 291 and Lys-511; that span reads GFLG…MVKN.

This sequence belongs to the HIBADH-related family. NP60 subfamily. Binds to mononucleosomes.

The protein localises to the chromosome. Its function is as follows. Nucleosome-destabilizing factor that is recruited to genes during transcriptional activation and colocalizes with a subset of trimethylated 'Lys-36' histone H3 (H3K36me3)-enriched regions. In Aedes aegypti (Yellowfever mosquito), this protein is Cytokine-like nuclear factor N-PAC.